The primary structure comprises 369 residues: Homoserine O-succinyltransferase (369 aa).

Residues 49 to 328 (NAVFICHALT…RFDSTQSARM (280 aa)) form the AB hydrolase-1 domain. Residue Ser154 is the Nucleophile of the active site. Arg224 lines the substrate pocket. Residues Asp317 and His350 contribute to the active site. Residue Asp351 coordinates substrate.

It belongs to the AB hydrolase superfamily. MetX family. As to quaternary structure, homodimer.

It is found in the cytoplasm. It catalyses the reaction L-homoserine + succinyl-CoA = O-succinyl-L-homoserine + CoA. Its pathway is amino-acid biosynthesis; L-methionine biosynthesis via de novo pathway; O-succinyl-L-homoserine from L-homoserine: step 1/1. Functionally, transfers a succinyl group from succinyl-CoA to L-homoserine, forming succinyl-L-homoserine. The polypeptide is Homoserine O-succinyltransferase (Nocardioides sp. (strain ATCC BAA-499 / JS614)).